The sequence spans 430 residues: Tol-Pal system protein TolB (430 aa).

The N-terminal stretch at 1-21 (MRRFVTLLIALLCLSATAVQA) is a signal peptide.

Belongs to the TolB family. As to quaternary structure, the Tol-Pal system is composed of five core proteins: the inner membrane proteins TolA, TolQ and TolR, the periplasmic protein TolB and the outer membrane protein Pal. They form a network linking the inner and outer membranes and the peptidoglycan layer.

It is found in the periplasm. Functionally, part of the Tol-Pal system, which plays a role in outer membrane invagination during cell division and is important for maintaining outer membrane integrity. This is Tol-Pal system protein TolB from Syntrophotalea carbinolica (strain DSM 2380 / NBRC 103641 / GraBd1) (Pelobacter carbinolicus).